A 337-amino-acid chain; its full sequence is Anthranilate phosphoribosyltransferase (337 aa).

Residues Gly82, 85 to 86 (GD), Thr90, 92 to 95 (NIST), 110 to 118 (KHGGRSVSS), and Ser122 each bind 5-phospho-alpha-D-ribose 1-diphosphate. Gly82 is a binding site for anthranilate. Position 94 (Ser94) interacts with Mg(2+). Residue Arg168 coordinates anthranilate. The Mg(2+) site is built by Asp226 and Glu227.

This sequence belongs to the anthranilate phosphoribosyltransferase family. As to quaternary structure, homodimer. Mg(2+) serves as cofactor.

It catalyses the reaction N-(5-phospho-beta-D-ribosyl)anthranilate + diphosphate = 5-phospho-alpha-D-ribose 1-diphosphate + anthranilate. Its pathway is amino-acid biosynthesis; L-tryptophan biosynthesis; L-tryptophan from chorismate: step 2/5. In terms of biological role, catalyzes the transfer of the phosphoribosyl group of 5-phosphorylribose-1-pyrophosphate (PRPP) to anthranilate to yield N-(5'-phosphoribosyl)-anthranilate (PRA). The sequence is that of Anthranilate phosphoribosyltransferase from Francisella tularensis subsp. mediasiatica (strain FSC147).